We begin with the raw amino-acid sequence, 239 residues long: MKKTYFIADLHLSENRPHLTHLFCDFMQQLAPQAEALYILGDLFDFWIGDDEESALIHTVQQQIHALSAQGVKCYFQHGNRDFLIGKRFAAACGMTLLPTYQRIALYGESVLLCHGDTLCIDDVAYQQYRKKVHQKWRQWLFLHLPLKVRLKIAEKIRARSKADKKRKSEEIMDVNPDFVLQTFAQFGVKKIIHGHTHRQHIHHIPPHFTRIVLGDWGDTASILEVNEQQQVRFLTGKE.

5 residues coordinate Mn(2+): aspartate 9, histidine 11, aspartate 42, asparagine 80, and histidine 115. Residue 80–81 (NR) coordinates substrate. 5 residues coordinate substrate: aspartate 123, serine 161, lysine 165, lysine 168, and histidine 196. Mn(2+)-binding residues include histidine 196 and histidine 198.

Belongs to the LpxH family. Requires Mn(2+) as cofactor.

It is found in the cell inner membrane. It carries out the reaction UDP-2-N,3-O-bis[(3R)-3-hydroxytetradecanoyl]-alpha-D-glucosamine + H2O = 2-N,3-O-bis[(3R)-3-hydroxytetradecanoyl]-alpha-D-glucosaminyl 1-phosphate + UMP + 2 H(+). It functions in the pathway glycolipid biosynthesis; lipid IV(A) biosynthesis; lipid IV(A) from (3R)-3-hydroxytetradecanoyl-[acyl-carrier-protein] and UDP-N-acetyl-alpha-D-glucosamine: step 4/6. Functionally, hydrolyzes the pyrophosphate bond of UDP-2,3-diacylglucosamine to yield 2,3-diacylglucosamine 1-phosphate (lipid X) and UMP by catalyzing the attack of water at the alpha-P atom. Involved in the biosynthesis of lipid A, a phosphorylated glycolipid that anchors the lipopolysaccharide to the outer membrane of the cell. This Pasteurella multocida (strain Pm70) protein is UDP-2,3-diacylglucosamine hydrolase.